The following is a 404-amino-acid chain: Caspase-1 (404 aa).

The CARD domain maps to Met-1–Ala-91. Positions Met-1 to Asp-119 are excised as a propeptide. A Glycyl lysine isopeptide (Lys-Gly) (interchain with G-Cter in ubiquitin) cross-link involves residue Lys-134. Catalysis depends on residues His-237 and Cys-285. The propeptide at Ser-298–Asp-316 is interdomain linker. Phosphoserine is present on Ser-302.

The protein belongs to the peptidase C14A family. Heterotetramer that consists of two anti-parallel arranged heterodimers, each one formed by a 20 kDa (Caspase-1 subunit p20) and a 10 kDa (Caspase-1 subunit p10) subunit. May be a component of the inflammasome, a protein complex which also includes PYCARD, CARD8 and NLRP2 and whose function would be the activation of pro-inflammatory caspases. Component of the AIM2 PANoptosome complex, a multiprotein complex that drives inflammatory cell death (PANoptosis). Interacts with CARD8; interacts with the released C-terminus of CARD8 which forms an inflammasome and directly activates CASP1 to promote pyroptosis. Both the p10 and p20 subunits interact with MEFV. Interacts with CARD17P/INCA and CARD18. Interacts with SERPINB1; this interaction regulates CASP1 activity. As to quaternary structure, heterotetramer that consists of two anti-parallel arranged heterodimers, each one formed by a 20 kDa (Caspase-1 subunit p20) and a 10 kDa (Caspase-1 subunit p10) subunit. Can form a heterodimer with isoform epsilon which then has an inhibitory effect. In terms of assembly, heterotetramer that consists of two anti-parallel arranged heterodimers, each one formed by a 20 kDa (Caspase-1 subunit p20) and a 10 kDa (Caspase-1 subunit p10) subunit. Can form a heterodimer with Caspase-1 subunit p20 which then has an inhibitory effect. In terms of processing, the two subunits are derived from the precursor sequence by an autocatalytic mechanism. Ubiquitinated via 'Lys-11'-linked polyubiquitination. Deubiquitinated by USP8. Post-translationally, cleavage in the interdomain linker region is required to induce pyroptosis. As to expression, expressed in larger amounts in spleen and lung. Detected in liver, heart, small intestine, colon, thymus, prostate, skeletal muscle, peripheral blood leukocytes, kidney and testis. No expression in the brain.

It is found in the cytoplasm. The protein localises to the cell membrane. The enzyme catalyses Strict requirement for an Asp residue at position P1 and has a preferred cleavage sequence of Tyr-Val-Ala-Asp-|-.. Its activity is regulated as follows. (Microbial infection) Specifically inhibited by the cowpox virus Crma protein. Its function is as follows. Thiol protease involved in a variety of inflammatory processes by proteolytically cleaving other proteins, such as the precursors of the inflammatory cytokines interleukin-1 beta (IL1B) and interleukin 18 (IL18) as well as the pyroptosis inducer Gasdermin-D (GSDMD), into active mature peptides. Plays a key role in cell immunity as an inflammatory response initiator: once activated through formation of an inflammasome complex, it initiates a pro-inflammatory response through the cleavage of the two inflammatory cytokines IL1B and IL18, releasing the mature cytokines which are involved in a variety of inflammatory processes. Cleaves a tetrapeptide after an Asp residue at position P1. Also initiates pyroptosis, a programmed lytic cell death pathway, through cleavage of GSDMD. In contrast to cleavage of interleukin IL1B, recognition and cleavage of GSDMD is not strictly dependent on the consensus cleavage site but depends on an exosite interface on CASP1 that recognizes and binds the Gasdermin-D, C-terminal (GSDMD-CT) part. Cleaves and activates CASP7 in response to bacterial infection, promoting plasma membrane repair. Upon inflammasome activation, during DNA virus infection but not RNA virus challenge, controls antiviral immunity through the cleavage of CGAS, rendering it inactive. In apoptotic cells, cleaves SPHK2 which is released from cells and remains enzymatically active extracellularly. Functionally, apoptosis inactive. In Homo sapiens (Human), this protein is Caspase-1 (CASP1).